Consider the following 128-residue polypeptide: Glycoprotein hormone alpha-2 (128 aa).

Positions 1–20 are cleaved as a signal peptide; that stretch reads MPMAPRVLLLCLLGLAVTEG. 4 cysteine pairs are disulfide-bonded: C30–C88, C47–C102, C56–C118, and C60–C120. N-linked (GlcNAc...) asparagine glycans are attached at residues N36 and N80.

This sequence belongs to the glycoprotein hormones subunit alpha family. As to quaternary structure, heterodimer with GPHB5; this heterodimer interacts with thyroid-stimulating hormone receptor (TSHR), and hence stimulates cAMP production.

The protein localises to the secreted. Its function is as follows. Functions as a heterodimeric glycoprotein hormone with GPHB5 able to bind and activate the thyroid-stimulating hormone receptor (TSHR), leading to increased cAMP production. Plays a central role in controlling thyroid cell metabolism. This Mus musculus (Mouse) protein is Glycoprotein hormone alpha-2 (Gpha2).